A 505-amino-acid polypeptide reads, in one-letter code: Pup deamidase/depupylase (505 aa).

Residue 6-10 coordinates ATP; sequence GTEVE. Mg(2+) contacts are provided by Glu-8 and Tyr-93. Catalysis depends on Asp-95, which acts as the Proton acceptor. Position 100 (Glu-100) interacts with Mg(2+). 102–103 is an ATP binding site; that stretch reads SA. His-156 contacts Mg(2+). ATP-binding residues include Asn-158 and Arg-240. His-242 contacts Mg(2+).

It belongs to the Pup ligase/Pup deamidase family. Pup deamidase subfamily. As to quaternary structure, interacts with the prokaryotic ubiquitin-like protein Pup. ATP is required as a cofactor.

The enzyme catalyses [prokaryotic ubiquitin-like protein]-C-terminal-L-glutamine + H2O = [prokaryotic ubiquitin-like protein]-C-terminal-L-glutamate + NH4(+). It functions in the pathway protein degradation; proteasomal Pup-dependent pathway. Its function is as follows. Specifically catalyzes the deamidation of the C-terminal glutamine of the prokaryotic ubiquitin-like protein Pup to glutamate, thereby rendering Pup competent for conjugation. Also displays depupylase (DPUP) activity, removing conjugated Pup from target proteins; is thus involved in the recycling of Pup and may function similarly to deubiquitinases (DUBs) in eukaryotes to prevent or promote proteasomal degradation of certain proteins. This Mycobacterium tuberculosis (strain CDC 1551 / Oshkosh) protein is Pup deamidase/depupylase (dop).